The primary structure comprises 654 residues: Threonine--tRNA ligase (654 aa).

A TGS domain is found at 1–63 (MAQISLTFPD…DADASIAIHT (63 aa)). Residues 247-544 (DHRKLGREMN…LIENFAGKLP (298 aa)) form a catalytic region. Residues Cys344, His395, and His521 each contribute to the Zn(2+) site.

It belongs to the class-II aminoacyl-tRNA synthetase family. In terms of assembly, homodimer. The cofactor is Zn(2+).

The protein resides in the cytoplasm. The catalysed reaction is tRNA(Thr) + L-threonine + ATP = L-threonyl-tRNA(Thr) + AMP + diphosphate + H(+). Functionally, catalyzes the attachment of threonine to tRNA(Thr) in a two-step reaction: L-threonine is first activated by ATP to form Thr-AMP and then transferred to the acceptor end of tRNA(Thr). Also edits incorrectly charged L-seryl-tRNA(Thr). The protein is Threonine--tRNA ligase of Dinoroseobacter shibae (strain DSM 16493 / NCIMB 14021 / DFL 12).